Consider the following 290-residue polypeptide: tRNA dimethylallyltransferase (290 aa).

Residue 11 to 18 participates in ATP binding; sequence GPTASGKS. 13–18 contributes to the substrate binding site; that stretch reads TASGKS. Interaction with substrate tRNA regions lie at residues 36 to 39 and 158 to 162; these read DSMQ and QRIVR.

This sequence belongs to the IPP transferase family. Monomer. It depends on Mg(2+) as a cofactor.

It carries out the reaction adenosine(37) in tRNA + dimethylallyl diphosphate = N(6)-dimethylallyladenosine(37) in tRNA + diphosphate. Its function is as follows. Catalyzes the transfer of a dimethylallyl group onto the adenine at position 37 in tRNAs that read codons beginning with uridine, leading to the formation of N6-(dimethylallyl)adenosine (i(6)A). This chain is tRNA dimethylallyltransferase, found in Bartonella tribocorum (strain CIP 105476 / IBS 506).